Here is a 313-residue protein sequence, read N- to C-terminus: Ribosomal RNA small subunit methyltransferase I (313 aa).

A disordered region spans residues 1–23 (MASIQLARTTRGGDGVARADGTR).

It belongs to the methyltransferase superfamily. RsmI family.

Its subcellular location is the cytoplasm. The enzyme catalyses cytidine(1402) in 16S rRNA + S-adenosyl-L-methionine = 2'-O-methylcytidine(1402) in 16S rRNA + S-adenosyl-L-homocysteine + H(+). Catalyzes the 2'-O-methylation of the ribose of cytidine 1402 (C1402) in 16S rRNA. The chain is Ribosomal RNA small subunit methyltransferase I from Micromonospora olivasterospora.